The chain runs to 740 residues: Polyribonucleotide nucleotidyltransferase (740 aa).

Residues D496 and D502 each contribute to the Mg(2+) site. In terms of domain architecture, KH spans 563–622 (PAIIRTSIHPDKIRDIIGPGGKIIKKLVEETGADIDIEDDGRVFIAAVDREKGKRALEII). The S1 motif domain occupies 632 to 706 (GKLYNGKVTR…QQGRLKLSKK (75 aa)). The disordered stretch occupies residues 707–740 (EAMRDMGLAPAESTSEQPEKRERRPFSRPKATKE). Residues 723–740 (QPEKRERRPFSRPKATKE) are compositionally biased toward basic and acidic residues.

This sequence belongs to the polyribonucleotide nucleotidyltransferase family. The cofactor is Mg(2+).

Its subcellular location is the cytoplasm. The enzyme catalyses RNA(n+1) + phosphate = RNA(n) + a ribonucleoside 5'-diphosphate. Functionally, involved in mRNA degradation. Catalyzes the phosphorolysis of single-stranded polyribonucleotides processively in the 3'- to 5'-direction. The protein is Polyribonucleotide nucleotidyltransferase of Desulforamulus reducens (strain ATCC BAA-1160 / DSM 100696 / MI-1) (Desulfotomaculum reducens).